The sequence spans 469 residues: Interstitial collagenase (469 aa).

Residues 1–19 (MFSLLLLLLLLCNTGSHGF) form the signal peptide. Residues 20–99 (PAATSETQEQ…PRCGVPDVAE (80 aa)) constitute a propeptide, activation peptide. The residue at position 57 (S57) is a Phosphoserine. The Cysteine switch motif lies at 90 to 97 (PRCGVPDV). C92 contributes to the Zn(2+) binding site. A glycan (N-linked (GlcNAc...) asparagine) is linked at N120. Positions 124 and 158 each coordinate Ca(2+). Residues H168 and D170 each contribute to the Zn(2+) site. Residues D175, G176, G178, and N180 each coordinate Ca(2+). H183 contributes to the Zn(2+) binding site. Ca(2+)-binding residues include G190, G192, and D194. H196 is a binding site for Zn(2+). Residues D198, E199, and E201 each contribute to the Ca(2+) site. H218 serves as a coordination point for Zn(2+). The active site involves E219. Residues H222 and H228 each coordinate Zn(2+). T274 bears the Phosphothreonine mark. Hemopexin repeat units lie at residues 275 to 324 (PQVC…WPQV), 325 to 371 (PNGL…FGFP), 374 to 422 (VKNI…FPGI), and 423 to 466 (GNKV…WFNC). C278 and C466 are joined by a disulfide. Ca(2+) is bound by residues D285 and Q329. A Phosphotyrosine; by PKDCC modification is found at Y360. D378 and D427 together coordinate Ca(2+).

The protein belongs to the peptidase M10A family. It depends on Ca(2+) as a cofactor. Requires Zn(2+) as cofactor. In terms of processing, undergoes autolytic cleavage to produce a N-terminal fragment having reduced collagenolytic activity. Post-translationally, tyrosine phosphorylated in platelets by PKDCC/VLK.

The protein resides in the secreted. It localises to the extracellular space. It is found in the extracellular matrix. The enzyme catalyses Cleavage of the triple helix of collagen at about three-quarters of the length of the molecule from the N-terminus, at 775-Gly-|-Ile-776 in the alpha1(I) chain. Cleaves synthetic substrates and alpha-macroglobulins at bonds where P1' is a hydrophobic residue.. With respect to regulation, can be activated without removal of the activation peptide. Its function is as follows. Cleaves collagens of types I, II, and III at one site in the helical domain. Also cleaves collagens of types VII and X. This chain is Interstitial collagenase (MMP1), found in Sus scrofa (Pig).